We begin with the raw amino-acid sequence, 447 residues long: MNHRYLPMTTDDRQEMLQAIGVDSIEELFSDIPQDIRFKGKLNIPNALKEPELIRYFQQLANENVHLKDKASFLGAGVYDHYIPSIVDHVISRSEFYTAYTPYQPEISQGELQAIFEFQTMICELTGMEVANSSMYDGPTALAEAAMMSCGHTKKKKILVSKAVHPEARDVLMTNAYGQRLEVVEIDTNNGVTDVEHLKALYDEETACVIVQHPNFFGRLEPLAEIESVSHQGKATFVVSSNPLALGLLKPPGAFGADVVVGDAQPFGIPTQYGGPHCGYFATTKKLMRKVPGRLVGQTTDDQGQRGFVLTLQAREQHIRREKATSNICSNQALNALAAAVAMATIGKRGVKEMALQNVQKAAYAKSQLKANGVEIVAEGPCFNEFIIKLSSPLHEVEEALLAKGFIAGYDLGKVYPELEGHMLVAVTEVRTKEEIDQFAKEVGMFA.

It belongs to the GcvP family. N-terminal subunit subfamily. As to quaternary structure, the glycine cleavage system is composed of four proteins: P, T, L and H. In this organism, the P 'protein' is a heterodimer of two subunits.

It carries out the reaction N(6)-[(R)-lipoyl]-L-lysyl-[glycine-cleavage complex H protein] + glycine + H(+) = N(6)-[(R)-S(8)-aminomethyldihydrolipoyl]-L-lysyl-[glycine-cleavage complex H protein] + CO2. Functionally, the glycine cleavage system catalyzes the degradation of glycine. The P protein binds the alpha-amino group of glycine through its pyridoxal phosphate cofactor; CO(2) is released and the remaining methylamine moiety is then transferred to the lipoamide cofactor of the H protein. In Halalkalibacterium halodurans (strain ATCC BAA-125 / DSM 18197 / FERM 7344 / JCM 9153 / C-125) (Bacillus halodurans), this protein is Probable glycine dehydrogenase (decarboxylating) subunit 1.